The primary structure comprises 335 residues: Nucleoid-associated protein CKO_00588 (335 aa).

This sequence belongs to the YejK family.

It is found in the cytoplasm. The protein resides in the nucleoid. This is Nucleoid-associated protein CKO_00588 from Citrobacter koseri (strain ATCC BAA-895 / CDC 4225-83 / SGSC4696).